The sequence spans 174 residues: NADH-ubiquinone oxidoreductase chain 6 (174 aa).

The next 4 helical transmembrane spans lie at 25–45 (SMGL…SIYV), 48–68 (FWFS…LFIY), 82–102 (FSLT…FFMI), and 143–163 (LITL…VKIT).

This sequence belongs to the complex I subunit 6 family.

It is found in the mitochondrion membrane. The catalysed reaction is a ubiquinone + NADH + 5 H(+)(in) = a ubiquinol + NAD(+) + 4 H(+)(out). Its function is as follows. Core subunit of the mitochondrial membrane respiratory chain NADH dehydrogenase (Complex I) that is believed to belong to the minimal assembly required for catalysis. Complex I functions in the transfer of electrons from NADH to the respiratory chain. The immediate electron acceptor for the enzyme is believed to be ubiquinone. The sequence is that of NADH-ubiquinone oxidoreductase chain 6 (ND6) from Anopheles albimanus (New world malaria mosquito).